A 203-amino-acid chain; its full sequence is GTP-binding protein YPTM2 (203 aa).

Residues 15–23 (GDSGVGKSC), 33–40 (YLDSYIST), 63–67 (DTAGQ), 121–124 (NKSD), and 151–153 (SAK) each bind GTP. The Effector region motif lies at 37–45 (YISTIGVDF). 2 S-geranylgeranyl cysteine lipidation sites follow: Cys-200 and Cys-201.

This sequence belongs to the small GTPase superfamily. Rab family. In terms of tissue distribution, its expression is weak in stems, higher in roots, leaves and coleoptiles, but highest in flowers.

It is found in the cell membrane. Protein transport. Probably involved in vesicular traffic. The sequence is that of GTP-binding protein YPTM2 (YPTM2) from Zea mays (Maize).